The primary structure comprises 355 residues: Alanine racemase (355 aa).

The Proton acceptor; specific for D-alanine role is filled by lysine 34. Lysine 34 carries the post-translational modification N6-(pyridoxal phosphate)lysine. Arginine 133 serves as a coordination point for substrate. The Proton acceptor; specific for L-alanine role is filled by tyrosine 249. Methionine 297 is a substrate binding site.

It belongs to the alanine racemase family. Pyridoxal 5'-phosphate serves as cofactor.

It carries out the reaction L-alanine = D-alanine. Its pathway is amino-acid biosynthesis; D-alanine biosynthesis; D-alanine from L-alanine: step 1/1. Catalyzes the interconversion of L-alanine and D-alanine. May also act on other amino acids. The polypeptide is Alanine racemase (alr) (Rickettsia akari (strain Hartford)).